Consider the following 82-residue polypeptide: Small ribosomal subunit protein uS17 (82 aa).

It belongs to the universal ribosomal protein uS17 family. As to quaternary structure, part of the 30S ribosomal subunit.

Its function is as follows. One of the primary rRNA binding proteins, it binds specifically to the 5'-end of 16S ribosomal RNA. The sequence is that of Small ribosomal subunit protein uS17 from Nitrobacter winogradskyi (strain ATCC 25391 / DSM 10237 / CIP 104748 / NCIMB 11846 / Nb-255).